Consider the following 444-residue polypeptide: Phosphoglucosamine mutase (444 aa).

Residue Ser-101 is the Phosphoserine intermediate of the active site. Residues Ser-101, Asp-240, Asp-242, and Asp-244 each coordinate Mg(2+). Ser-101 is subject to Phosphoserine.

Belongs to the phosphohexose mutase family. Mg(2+) serves as cofactor. Post-translationally, activated by phosphorylation.

The catalysed reaction is alpha-D-glucosamine 1-phosphate = D-glucosamine 6-phosphate. Functionally, catalyzes the conversion of glucosamine-6-phosphate to glucosamine-1-phosphate. The chain is Phosphoglucosamine mutase from Aeromonas salmonicida (strain A449).